Reading from the N-terminus, the 88-residue chain is Sec-independent protein translocase protein TatA (88 aa).

A helical transmembrane segment spans residues 4-24; sequence LSIWHWLIVLAVVLVLFVGGG. A disordered region spans residues 45 to 88; that stretch reads ADDETMEGSTGSGGHIAPPGPAAGTVQRDASFSGTGRPSGSSTP. Low complexity predominate over residues 75 to 88; the sequence is SFSGTGRPSGSSTP.

Belongs to the TatA/E family. In terms of assembly, the Tat system comprises two distinct complexes: a TatABC complex, containing multiple copies of TatA, TatB and TatC subunits, and a separate TatA complex, containing only TatA subunits. Substrates initially bind to the TatABC complex, which probably triggers association of the separate TatA complex to form the active translocon.

It is found in the cell inner membrane. Part of the twin-arginine translocation (Tat) system that transports large folded proteins containing a characteristic twin-arginine motif in their signal peptide across membranes. TatA could form the protein-conducting channel of the Tat system. The protein is Sec-independent protein translocase protein TatA of Gluconacetobacter diazotrophicus (strain ATCC 49037 / DSM 5601 / CCUG 37298 / CIP 103539 / LMG 7603 / PAl5).